Here is a 310-residue protein sequence, read N- to C-terminus: Small ribosomal subunit biogenesis GTPase RsgA (310 aa).

In terms of domain architecture, CP-type G spans 77 to 238; that stretch reads LSKQSHILAA…IIDTPGIKGF (162 aa). Residues 126–129 and 180–188 each bind GTP; these read NKTD and GNSGVGKST. Residues Cys-262, Cys-267, His-269, and Cys-275 each contribute to the Zn(2+) site.

It belongs to the TRAFAC class YlqF/YawG GTPase family. RsgA subfamily. As to quaternary structure, monomer. Associates with 30S ribosomal subunit, binds 16S rRNA. It depends on Zn(2+) as a cofactor.

It localises to the cytoplasm. Functionally, one of several proteins that assist in the late maturation steps of the functional core of the 30S ribosomal subunit. Helps release RbfA from mature subunits. May play a role in the assembly of ribosomal proteins into the subunit. Circularly permuted GTPase that catalyzes slow GTP hydrolysis, GTPase activity is stimulated by the 30S ribosomal subunit. The protein is Small ribosomal subunit biogenesis GTPase RsgA of Phocaeicola vulgatus (strain ATCC 8482 / DSM 1447 / JCM 5826 / CCUG 4940 / NBRC 14291 / NCTC 11154) (Bacteroides vulgatus).